Consider the following 221-residue polypeptide: Large ribosomal subunit protein uL16y (221 aa).

It belongs to the universal ribosomal protein uL16 family. As to quaternary structure, component of the small ribosomal subunit. Mature ribosomes consist of a small (40S) and a large (60S) subunit. The 40S subunit contains about 33 different proteins and 1 molecule of RNA (18S). The 60S subunit contains about 49 different proteins and 3 molecules of RNA (25S, 5.8S and 5S).

In Arabidopsis thaliana (Mouse-ear cress), this protein is Large ribosomal subunit protein uL16y (RPL10B).